The sequence spans 222 residues: Large ribosomal subunit protein uL4 (222 aa).

This sequence belongs to the universal ribosomal protein uL4 family. In terms of assembly, part of the 50S ribosomal subunit.

One of the primary rRNA binding proteins, this protein initially binds near the 5'-end of the 23S rRNA. It is important during the early stages of 50S assembly. It makes multiple contacts with different domains of the 23S rRNA in the assembled 50S subunit and ribosome. In terms of biological role, forms part of the polypeptide exit tunnel. This Chlamydia trachomatis serovar L2 (strain ATCC VR-902B / DSM 19102 / 434/Bu) protein is Large ribosomal subunit protein uL4.